The primary structure comprises 311 residues: Very-long-chain 3-oxoacyl-CoA reductase-B (311 aa).

A helical transmembrane segment spans residues 8–28; sequence LFWVGAVTVLWLSVSSLWSLI. 48 to 77 serves as a coordination point for NADP(+); the sequence is GKWAVVTGATDGIGKAYAEELARRGFAIVL. A helical transmembrane segment spans residues 125–145; sequence IGVLVNNVGVSYSYPEFFLNI. Serine 187 lines the substrate pocket. Catalysis depends on tyrosine 200, which acts as the Proton acceptor. The helical transmembrane segment at 269–289 threads the bilayer; the sequence is GYLPHAIMGWVTASLLPAKLL.

Belongs to the short-chain dehydrogenases/reductases (SDR) family. 17-beta-HSD 3 subfamily.

The protein resides in the endoplasmic reticulum membrane. The enzyme catalyses a very-long-chain (3R)-3-hydroxyacyl-CoA + NADP(+) = a very-long-chain 3-oxoacyl-CoA + NADPH + H(+). It carries out the reaction 17beta-estradiol + NAD(+) = estrone + NADH + H(+). It catalyses the reaction 17beta-estradiol + NADP(+) = estrone + NADPH + H(+). The protein operates within lipid metabolism; fatty acid biosynthesis. It functions in the pathway steroid biosynthesis; estrogen biosynthesis. Functionally, catalyzes the second of the four reactions of the long-chain fatty acids elongation cycle. This endoplasmic reticulum-bound enzymatic process, allows the addition of two carbons to the chain of long- and very long-chain fatty acids/VLCFAs per cycle. This enzyme has a 3-ketoacyl-CoA reductase activity, reducing 3-ketoacyl-CoA to 3-hydroxyacyl-CoA, within each cycle of fatty acid elongation. Thereby, it may participate in the production of VLCFAs of different chain lengths that are involved in multiple biological processes as precursors of membrane lipids and lipid mediators. May also catalyze the transformation of estrone (E1) into estradiol (E2) and play a role in estrogen formation. The polypeptide is Very-long-chain 3-oxoacyl-CoA reductase-B (hsd17b12b) (Danio rerio (Zebrafish)).